The primary structure comprises 536 residues: Caspase A (536 aa).

Positions 1-273 are cleaved as a propeptide — removed in mature form by autoprocessing; it reads MVLKTIEDNC…DSQSRMPRTD (273 aa). Residues His-364 and Cys-406 contribute to the active site.

This sequence belongs to the peptidase C14A family. As to quaternary structure, heterodimer formed by the tight association of the large subunit p16 and the small subunit p14. Post-translationally, autocatalytic cleavage removes the propeptide and generates the two active subunits p16 and p14 in vitro. Cannot be cleaved by ced-3 in vitro. Isoform a: Expression is restricted to the late germline pachytene stage of meiosis I in both L4 larvae and adult hermaphrodite gonads. Isoform b: Expression is restricted to the late germline pachytene stage of meiosis I in both L4 larvae and adult hermaphrodite gonads.

It catalyses the reaction Strict requirement for an Asp residue at position P1 and has a preferred cleavage sequence of Tyr-Val-Ala-Asp-|-.. Inhibited by cysteine protease inhibitor iodoacetic acid (CH3COOI) but not by N-[N-(L-3-transcarboxirane-2-carbonyl)-leucyl]-agmatine (E-64) or benzyloxycarbonyl-DEVD-fluoro-methyl ketone (Z-DEVD-FMK). In terms of biological role, cysteine protease which, in vitro, cleaves itself and caspase ced-3 into their mature active forms. Also cleaves, in vitro, inactive caspase csp-2 isoform b. Required maternally to induce apoptosis in a subset of cells fated to die during embryogenesis, mostly independently of the ced-9, ced-4 and ced-3 canonical apoptosis pathway. Involved in the degeneration of dopaminergic CEP neurons in response to high Mn(2+) levels. Its function is as follows. Dispensable for regulating apoptosis during embryogenesis. This Caenorhabditis elegans protein is Caspase A.